A 345-amino-acid chain; its full sequence is uncharacterized protein (345 aa).

It is found in the cell membrane. Functionally, involved in potassium and divalent cation transport. Enhances the transport activity of the cation/potassium transporter CzcD. This is an uncharacterized protein from Bacillus subtilis (strain 168).